The sequence spans 27 residues: MRDVTVVATSKFNIVKNRIKAERWVKI.

This is an uncharacterized protein from Archaeoglobus fulgidus (strain ATCC 49558 / DSM 4304 / JCM 9628 / NBRC 100126 / VC-16).